Here is a 208-residue protein sequence, read N- to C-terminus: Small ribosomal subunit protein eS1 (208 aa).

The protein belongs to the eukaryotic ribosomal protein eS1 family.

The polypeptide is Small ribosomal subunit protein eS1 (Saccharolobus solfataricus (strain ATCC 35092 / DSM 1617 / JCM 11322 / P2) (Sulfolobus solfataricus)).